The sequence spans 604 residues: M-phase inducer phosphatase cdc-25.1 (604 aa).

Disordered stretches follow at residues proline 33–phenylalanine 67 and glutamate 127–aspartate 188. Residues arginine 44 to serine 54 are compositionally biased toward polar residues. The segment covering glutamate 127–asparagine 138 has biased composition (basic and acidic residues). Positions phenylalanine 305 to isoleucine 413 constitute a Rhodanese domain. Disordered regions lie at residues alanine 443 to serine 464 and aspartate 562 to glutamine 588.

Belongs to the MPI phosphatase family.

It catalyses the reaction O-phospho-L-tyrosyl-[protein] + H2O = L-tyrosyl-[protein] + phosphate. The sequence is that of M-phase inducer phosphatase cdc-25.1 (cdc-25.1) from Caenorhabditis elegans.